The sequence spans 186 residues: Ribosome-recycling factor (186 aa).

This sequence belongs to the RRF family.

It localises to the cytoplasm. Functionally, responsible for the release of ribosomes from messenger RNA at the termination of protein biosynthesis. May increase the efficiency of translation by recycling ribosomes from one round of translation to another. In Azorhizobium caulinodans (strain ATCC 43989 / DSM 5975 / JCM 20966 / LMG 6465 / NBRC 14845 / NCIMB 13405 / ORS 571), this protein is Ribosome-recycling factor.